The sequence spans 493 residues: Probable cytosol aminopeptidase (493 aa).

2 residues coordinate Mn(2+): K257 and D262. The active site involves K269. Mn(2+) contacts are provided by D280, D339, and E341. R343 is an active-site residue.

Belongs to the peptidase M17 family. Mn(2+) is required as a cofactor.

It localises to the cytoplasm. The catalysed reaction is Release of an N-terminal amino acid, Xaa-|-Yaa-, in which Xaa is preferably Leu, but may be other amino acids including Pro although not Arg or Lys, and Yaa may be Pro. Amino acid amides and methyl esters are also readily hydrolyzed, but rates on arylamides are exceedingly low.. It catalyses the reaction Release of an N-terminal amino acid, preferentially leucine, but not glutamic or aspartic acids.. In terms of biological role, presumably involved in the processing and regular turnover of intracellular proteins. Catalyzes the removal of unsubstituted N-terminal amino acids from various peptides. The chain is Probable cytosol aminopeptidase (pepA) from Aquifex aeolicus (strain VF5).